The sequence spans 475 residues: Na(+)/H(+) antiporter NhaA 2 (475 aa).

The next 12 membrane-spanning stretches (helical) occupy residues 44–64 (AQAT…WWAN), 92–112 (LKHI…GLEI), 130–150 (LILC…LFNW), 156–176 (IGWG…LTLV), 186–206 (AFLV…IALF), 211–231 (ISVI…IANY), 232–252 (AGVL…WTML), 255–275 (GVHP…RPML), 331–351 (ALDL…NAGV), 368–388 (LGIV…ACWL), 406–426 (VIGM…IATL), and 442–462 (ILFA…IIAA).

It belongs to the NhaA Na(+)/H(+) (TC 2.A.33) antiporter family.

Its subcellular location is the cell inner membrane. It carries out the reaction Na(+)(in) + 2 H(+)(out) = Na(+)(out) + 2 H(+)(in). In terms of biological role, na(+)/H(+) antiporter that extrudes sodium in exchange for external protons. This chain is Na(+)/H(+) antiporter NhaA 2, found in Psychromonas ingrahamii (strain DSM 17664 / CCUG 51855 / 37).